A 179-amino-acid polypeptide reads, in one-letter code: Molybdopterin synthase catalytic subunit (179 aa).

A compositionally biased stretch (polar residues) spans 1-10 (MTTSEDQTTP). The segment at 1 to 21 (MTTSEDQTTPAHLDPKTYPRH) is disordered. Substrate is bound by residues 127–128 (HR), Lys143, and 150–152 (KRE).

This sequence belongs to the MoaE family. MOCS2B subfamily. As to quaternary structure, heterotetramer; composed of 2 small (MOCS2A) and 2 large (MOCS2B) subunits.

It localises to the cytoplasm. It carries out the reaction 2 [molybdopterin-synthase sulfur-carrier protein]-C-terminal-Gly-aminoethanethioate + cyclic pyranopterin phosphate + H2O = molybdopterin + 2 [molybdopterin-synthase sulfur-carrier protein]-C-terminal Gly-Gly + 2 H(+). The protein operates within cofactor biosynthesis; molybdopterin biosynthesis. Functionally, catalytic subunit of the molybdopterin synthase complex, a complex that catalyzes the conversion of precursor Z into molybdopterin. Acts by mediating the incorporation of 2 sulfur atoms from thiocarboxylated MOCS2A into precursor Z to generate a dithiolene group. In Aspergillus oryzae (strain ATCC 42149 / RIB 40) (Yellow koji mold), this protein is Molybdopterin synthase catalytic subunit.